Here is a 379-residue protein sequence, read N- to C-terminus: Homoserine O-succinyltransferase (379 aa).

Positions asparagine 51–leucine 360 constitute an AB hydrolase-1 domain. Serine 157 (nucleophile) is an active-site residue. A substrate-binding site is contributed by arginine 227. Catalysis depends on residues aspartate 323 and histidine 356. Aspartate 357 provides a ligand contact to substrate.

This sequence belongs to the AB hydrolase superfamily. MetX family. Homodimer.

It is found in the cytoplasm. The enzyme catalyses L-homoserine + succinyl-CoA = O-succinyl-L-homoserine + CoA. Its pathway is amino-acid biosynthesis; L-methionine biosynthesis via de novo pathway; O-succinyl-L-homoserine from L-homoserine: step 1/1. In terms of biological role, transfers a succinyl group from succinyl-CoA to L-homoserine, forming succinyl-L-homoserine. In Pseudomonas putida (strain W619), this protein is Homoserine O-succinyltransferase.